Here is a 555-residue protein sequence, read N- to C-terminus: Glucose-6-phosphate isomerase (555 aa).

D-glucose 6-phosphate contacts are provided by residues 169–170 (GS), 219–224 (SKTFTT), Gln364, Glu368, His399, and Lys521. Glu368 functions as the Proton donor in the catalytic mechanism. Catalysis depends on residues His399 and Lys521.

This sequence belongs to the GPI family. As to quaternary structure, homodimer.

It is found in the cytoplasm. The protein localises to the cytosol. It catalyses the reaction alpha-D-glucose 6-phosphate = beta-D-fructose 6-phosphate. It participates in carbohydrate degradation; glycolysis; D-glyceraldehyde 3-phosphate and glycerone phosphate from D-glucose: step 2/4. In terms of biological role, in the cytoplasm, catalyzes the conversion of glucose-6-phosphate to fructose-6-phosphate, the second step in glycolysis, and the reverse reaction during gluconeogenesis. This chain is Glucose-6-phosphate isomerase (PGI1), found in Candida glabrata (strain ATCC 2001 / BCRC 20586 / JCM 3761 / NBRC 0622 / NRRL Y-65 / CBS 138) (Yeast).